The following is a 267-amino-acid chain: MAIVPEPAKEVMANYGDNNNDLLFEADGPKEMKCCTQNLDLGSLRNGSIQLQISHQLWNKSIRQMVSVIVAVEKPMKNPSSQAFCDDDQKSIFSFIFEEEPIILETCNDDFVCDANVQSMECKLQDKDHKSLVLAGPHMLKALHLLTGDLKREVVFCMSFVQGDDSNNKIPVTLGIKGKNLYLSCVMKDNTPTLQLEDIDPKRYPKRDMEKRFVFYKTEIKNRVEFESALYPNWYISTSQAEQKPVFLGNSKGRQDITDFTMEVLSP.

A propeptide spanning residues 1–114 is cleaved from the precursor; it reads MAIVPEPAKE…ETCNDDFVCD (114 aa).

It belongs to the IL-1 family. In terms of assembly, (Microbial infection) Interacts with African swine fever virus (ASFV) protein L83L. Monomer. In its precursor form, weakly interacts with full-length MEFV; the mature cytokine does not interact at all. Interacts with integrins ITGAV:ITGBV and ITGA5:ITGB1; integrin-binding is required for IL1B signaling. Interacts with cargo receptor TMED10; the interaction is direct and is required for the secretion of IL1B mature form. Interacts with HSP90AB1; the interaction facilitates cargo translocation into the ERGIC. Interacts with HSP90B1; the interaction facilitates cargo translocation into the ERGIC.

Its subcellular location is the cytoplasm. The protein resides in the cytosol. The protein localises to the secreted. It is found in the lysosome. It localises to the extracellular exosome. Functionally, potent pro-inflammatory cytokine. Initially discovered as the major endogenous pyrogen, induces prostaglandin synthesis, neutrophil influx and activation, T-cell activation and cytokine production, B-cell activation and antibody production, and fibroblast proliferation and collagen production. Promotes Th17 differentiation of T-cells. Synergizes with IL12/interleukin-12 to induce IFNG synthesis from T-helper 1 (Th1) cells. Plays a role in angiogenesis by inducing VEGF production synergistically with TNF and IL6. Involved in transduction of inflammation downstream of pyroptosis: its mature form is specifically released in the extracellular milieu by passing through the gasdermin-D (GSDMD) pore. This is Interleukin-1 beta (IL1B) from Sus scrofa (Pig).